Reading from the N-terminus, the 418-residue chain is L-rhamnose isomerase (418 aa).

Residues H261, D293, and D295 each coordinate Mn(2+).

Belongs to the rhamnose isomerase family. Mn(2+) is required as a cofactor.

Its subcellular location is the cytoplasm. The enzyme catalyses L-rhamnopyranose = L-rhamnulose. The protein operates within carbohydrate degradation; L-rhamnose degradation; glycerone phosphate from L-rhamnose: step 1/3. Functionally, catalyzes the interconversion of L-rhamnose and L-rhamnulose. In Clostridium beijerinckii (strain ATCC 51743 / NCIMB 8052) (Clostridium acetobutylicum), this protein is L-rhamnose isomerase.